A 47-amino-acid polypeptide reads, in one-letter code: NADH dehydrogenase [ubiquinone] iron-sulfur protein 2 (47 aa).

Belongs to the complex I 49 kDa subunit family. In terms of assembly, complex I is composed of about 45 different subunits. This is a component of the iron-sulfur (IP) fragment of the enzyme.

The protein resides in the mitochondrion inner membrane. The enzyme catalyses a ubiquinone + NADH + 5 H(+)(in) = a ubiquinol + NAD(+) + 4 H(+)(out). Its function is as follows. Core subunit of the mitochondrial membrane respiratory chain NADH dehydrogenase (Complex I) that is believed to belong to the minimal assembly required for catalysis. Complex I functions in the transfer of electrons from NADH to the respiratory chain. The immediate electron acceptor for the enzyme is believed to be ubiquinone. Component of the iron-sulfur (IP) fragment of the enzyme. In Solanum tuberosum (Potato), this protein is NADH dehydrogenase [ubiquinone] iron-sulfur protein 2 (NAD7).